The sequence spans 227 residues: Endo-1,4-beta-xylanase 11A (227 aa).

An N-terminal signal peptide occupies residues 1 to 36 (MVSASSLLLAASAIAGVFSAPAAAPVSENLNVLQER). The GH11 domain occupies 37–227 (ALTSSATGTS…SSGSASITVS (191 aa)). A necrosis inducing domain region spans residues 112–136 (VYGWTTSPLIEYYIVEDFGTYDPSS). E122 (nucleophile) is an active-site residue. E214 (proton donor) is an active-site residue.

This sequence belongs to the glycosyl hydrolase 11 (cellulase G) family.

The protein resides in the secreted. The enzyme catalyses Endohydrolysis of (1-&gt;4)-beta-D-xylosidic linkages in xylans.. It participates in glycan degradation; xylan degradation. With respect to regulation, significantly inhibited by the wheat xylanase inhibiting protein I (XIP-I) and the proteinaceous endoxylanase Triticum aestivum xylanase inhibitors I (TAXI-I), whereas no inhibition is detected with TAXI-II. Functionally, endo-1,4-beta-xylanase involved in the hydrolysis of xylan, a major structural heterogeneous polysaccharide found in plant biomass representing the second most abundant polysaccharide in the biosphere, after cellulose. Required for plant infection and the appearance of secondary lesions. Is able to induce necrosis on leaves, seedling growth inhibition, induction of a ROS burst, electrolyte leakage, cytoplasm shrinkage, autofluorescence, cell death, and induction of defense genes, and this abilities are independent of the catalytic activity. Only exhibits elicitor activity in certain plants such as tomato, but not in N.benthamiana. In Botryotinia fuckeliana (strain B05.10) (Noble rot fungus), this protein is Endo-1,4-beta-xylanase 11A.